We begin with the raw amino-acid sequence, 125 residues long: Fluoride-specific ion channel FluC (125 aa).

Transmembrane regions (helical) follow at residues 6–26 (VLVM…GLGI), 35–55 (FLFG…GLFA), 66–86 (LLLL…ALSI), and 100–120 (AMGY…AGYL). G76 and T79 together coordinate Na(+).

Belongs to the fluoride channel Fluc/FEX (TC 1.A.43) family.

Its subcellular location is the cell inner membrane. The catalysed reaction is fluoride(in) = fluoride(out). Na(+) is not transported, but it plays an essential structural role and its presence is essential for fluoride channel function. In terms of biological role, fluoride-specific ion channel. Important for reducing fluoride concentration in the cell, thus reducing its toxicity. This is Fluoride-specific ion channel FluC from Gloeobacter violaceus (strain ATCC 29082 / PCC 7421).